A 1404-amino-acid polypeptide reads, in one-letter code: DNA-directed RNA polymerase subunit beta' (1404 aa).

Residues Cys70, Cys72, Cys85, and Cys88 each coordinate Zn(2+). Mg(2+) is bound by residues Asp460, Asp462, and Asp464. Positions 814, 888, 895, and 898 each coordinate Zn(2+).

This sequence belongs to the RNA polymerase beta' chain family. The RNAP catalytic core consists of 2 alpha, 1 beta, 1 beta' and 1 omega subunit. When a sigma factor is associated with the core the holoenzyme is formed, which can initiate transcription. Requires Mg(2+) as cofactor. Zn(2+) is required as a cofactor.

It carries out the reaction RNA(n) + a ribonucleoside 5'-triphosphate = RNA(n+1) + diphosphate. In terms of biological role, DNA-dependent RNA polymerase catalyzes the transcription of DNA into RNA using the four ribonucleoside triphosphates as substrates. The protein is DNA-directed RNA polymerase subunit beta' of Shewanella halifaxensis (strain HAW-EB4).